We begin with the raw amino-acid sequence, 122 residues long: Small ribosomal subunit protein uS13 (122 aa).

The tract at residues valine 98–lysine 122 is disordered.

The protein belongs to the universal ribosomal protein uS13 family. In terms of assembly, part of the 30S ribosomal subunit. Forms a loose heterodimer with protein S19. Forms two bridges to the 50S subunit in the 70S ribosome.

Its function is as follows. Located at the top of the head of the 30S subunit, it contacts several helices of the 16S rRNA. In the 70S ribosome it contacts the 23S rRNA (bridge B1a) and protein L5 of the 50S subunit (bridge B1b), connecting the 2 subunits; these bridges are implicated in subunit movement. Contacts the tRNAs in the A and P-sites. The polypeptide is Small ribosomal subunit protein uS13 (Nautilia profundicola (strain ATCC BAA-1463 / DSM 18972 / AmH)).